A 419-amino-acid chain; its full sequence is Gamma-glutamyl phosphate reductase (419 aa).

Belongs to the gamma-glutamyl phosphate reductase family.

It localises to the cytoplasm. The catalysed reaction is L-glutamate 5-semialdehyde + phosphate + NADP(+) = L-glutamyl 5-phosphate + NADPH + H(+). It functions in the pathway amino-acid biosynthesis; L-proline biosynthesis; L-glutamate 5-semialdehyde from L-glutamate: step 2/2. In terms of biological role, catalyzes the NADPH-dependent reduction of L-glutamate 5-phosphate into L-glutamate 5-semialdehyde and phosphate. The product spontaneously undergoes cyclization to form 1-pyrroline-5-carboxylate. In Bordetella bronchiseptica (strain ATCC BAA-588 / NCTC 13252 / RB50) (Alcaligenes bronchisepticus), this protein is Gamma-glutamyl phosphate reductase.